The chain runs to 299 residues: UDP-N-acetylenolpyruvoylglucosamine reductase (299 aa).

The FAD-binding PCMH-type domain occupies 28 to 193; sequence IGGPVDLMVL…VSALMQLHKE (166 aa). Residue R172 is part of the active site. S222 acts as the Proton donor in catalysis. Residue E292 is part of the active site.

It belongs to the MurB family. FAD is required as a cofactor.

The protein localises to the cytoplasm. It carries out the reaction UDP-N-acetyl-alpha-D-muramate + NADP(+) = UDP-N-acetyl-3-O-(1-carboxyvinyl)-alpha-D-glucosamine + NADPH + H(+). Its pathway is cell wall biogenesis; peptidoglycan biosynthesis. In terms of biological role, cell wall formation. The protein is UDP-N-acetylenolpyruvoylglucosamine reductase of Syntrophomonas wolfei subsp. wolfei (strain DSM 2245B / Goettingen).